The chain runs to 510 residues: Putative folylpolyglutamate synthase (510 aa).

Residue 98 to 101 (GKGS) coordinates ATP. 3 residues coordinate Mg(2+): Ser-122, Glu-189, and His-217. Residues Arg-342 and Asp-357 each coordinate ATP.

Belongs to the folylpolyglutamate synthase family. Requires a monovalent cation as cofactor.

The protein resides in the mitochondrion inner membrane. It is found in the mitochondrion matrix. Its subcellular location is the cytoplasm. The enzyme catalyses (6S)-5,6,7,8-tetrahydrofolyl-(gamma-L-Glu)(n) + L-glutamate + ATP = (6S)-5,6,7,8-tetrahydrofolyl-(gamma-L-Glu)(n+1) + ADP + phosphate + H(+). It functions in the pathway cofactor biosynthesis; tetrahydrofolylpolyglutamate biosynthesis. Functionally, catalyzes conversion of folates to polyglutamate derivatives allowing concentration of folate compounds in the cell and the intracellular retention of these cofactors, which are important substrates for most of the folate-dependent enzymes that are involved in one-carbon transfer reactions involved in purine, pyrimidine and amino acid synthesis. This chain is Putative folylpolyglutamate synthase, found in Caenorhabditis elegans.